The following is a 925-amino-acid chain: Translation initiation factor IF-2 (925 aa).

Disordered stretches follow at residues 52 to 84 (GGGKAAEGAAKAPAKAAAKGDAKTAAKGDVKAP) and 98 to 326 (AGGN…GVRL). Residues 57-68 (AEGAAKAPAKAA) show a composition bias toward low complexity. The span at 69–84 (AKGDAKTAAKGDVKAP) shows a compositional bias: basic and acidic residues. Residues 98–138 (AGGNGEAAAPPAQPGGTATTPAAQATPEAPARPGPAAARPS) are compositionally biased toward low complexity. 2 stretches are compositionally biased toward pro residues: residues 139 to 169 (APAPGQPKPPAPGQPPRPGATPGPRPGPAPK) and 193 to 207 (PRPVPRPGAPRPGAP). Over residues 236–296 (RPGGGRPGGP…GAAGAFGRPG (61 aa)) the composition is skewed to gly residues. Residues 300-309 (RRGRKSKRQK) show a composition bias toward basic residues. Positions 421–592 (TRPPVVTVMG…AVLLTADAAL (172 aa)) constitute a tr-type G domain. The G1 stretch occupies residues 430–437 (GHVDHGKT). Position 430 to 437 (430 to 437 (GHVDHGKT)) interacts with GTP. Positions 455 to 459 (GITQH) are G2. The segment at 480-483 (DTPG) is G3. GTP contacts are provided by residues 480 to 484 (DTPGH) and 534 to 537 (NKID). The segment at 534-537 (NKID) is G4. Positions 570–572 (SAK) are G5.

The protein belongs to the TRAFAC class translation factor GTPase superfamily. Classic translation factor GTPase family. IF-2 subfamily.

The protein resides in the cytoplasm. Functionally, one of the essential components for the initiation of protein synthesis. Protects formylmethionyl-tRNA from spontaneous hydrolysis and promotes its binding to the 30S ribosomal subunits. Also involved in the hydrolysis of GTP during the formation of the 70S ribosomal complex. In Mycolicibacterium paratuberculosis (strain ATCC BAA-968 / K-10) (Mycobacterium paratuberculosis), this protein is Translation initiation factor IF-2.